Consider the following 104-residue polypeptide: ATP-dependent Clp protease adapter protein ClpS (104 aa).

Belongs to the ClpS family. Binds to the N-terminal domain of the chaperone ClpA.

In terms of biological role, involved in the modulation of the specificity of the ClpAP-mediated ATP-dependent protein degradation. This chain is ATP-dependent Clp protease adapter protein ClpS, found in Burkholderia thailandensis (strain ATCC 700388 / DSM 13276 / CCUG 48851 / CIP 106301 / E264).